A 287-amino-acid polypeptide reads, in one-letter code: Toxin zeta (287 aa).

Residue 40 to 47 coordinates ATP; sequence GQPGSGKT. Asparagine 66 serves as a coordination point for substrate. The Proton acceptor role is filled by aspartate 67. Glutamate 100, threonine 118, arginine 120, and threonine 128 together coordinate substrate. Residues 267–287 are disordered; sequence KLESLQPPTPPIPKTPKLPGI. A compositionally biased stretch (pro residues) spans 273-287; that stretch reads PPTPPIPKTPKLPGI.

This sequence belongs to the zeta toxin family. In terms of assembly, in the presence of the epsilon antitoxin forms an inactive PezA(2)PezT(2) heterotetramer. The heterotetramer is still able to bind the UNAG substrate.

The catalysed reaction is UDP-N-acetyl-alpha-D-glucosamine + ATP = UDP-N-acetyl-alpha-D-glucosamine 3'-phosphate + ADP + H(+). Toxic component of a type II toxin-antitoxin (TA) system. Phosphorylates UDP-N-acetyl-D-glucosamine (UNAG) on the 3'-hydroxyl group of the N-acetyl-D-glucosamine moiety, yielding UNAG-3P. UNAG-3P inhibits MurA, the first committed step in cell wall synthesis, which is then blocked. Phosphorylation is inhibited by cognate epsilon antitoxin. Part of a postsegregational killing (PSK) system involved in the killing of plasmid-free cells. The zeta toxin induces programmed cell death. This chain is Toxin zeta, found in Streptococcus pyogenes.